A 196-amino-acid chain; its full sequence is 7-methyl-GTP pyrophosphatase (196 aa).

The active-site Proton acceptor is the Asp72.

This sequence belongs to the Maf family. YceF subfamily. The cofactor is a divalent metal cation.

It localises to the cytoplasm. The enzyme catalyses N(7)-methyl-GTP + H2O = N(7)-methyl-GMP + diphosphate + H(+). Its function is as follows. Nucleoside triphosphate pyrophosphatase that hydrolyzes 7-methyl-GTP (m(7)GTP). May have a dual role in cell division arrest and in preventing the incorporation of modified nucleotides into cellular nucleic acids. The sequence is that of 7-methyl-GTP pyrophosphatase from Neisseria meningitidis serogroup B (strain ATCC BAA-335 / MC58).